The following is a 490-amino-acid chain: Probable malate:quinone oxidoreductase (490 aa).

The protein belongs to the MQO family. It depends on FAD as a cofactor.

It catalyses the reaction (S)-malate + a quinone = a quinol + oxaloacetate. It participates in carbohydrate metabolism; tricarboxylic acid cycle; oxaloacetate from (S)-malate (quinone route): step 1/1. This chain is Probable malate:quinone oxidoreductase, found in Corynebacterium jeikeium (strain K411).